The primary structure comprises 494 residues: Glycerol kinase 1 (494 aa).

Thr-12 lines the ADP pocket. Residues Thr-12, Thr-13, and Ser-14 each contribute to the ATP site. Residue Thr-12 participates in sn-glycerol 3-phosphate binding. Arg-16 provides a ligand contact to ADP. 4 residues coordinate sn-glycerol 3-phosphate: Arg-82, Glu-83, Tyr-134, and Asp-243. Residues Arg-82, Glu-83, Tyr-134, Asp-243, and Gln-244 each coordinate glycerol. Positions 265 and 308 each coordinate ADP. Positions 265, 308, 312, and 408 each coordinate ATP. Positions 408 and 412 each coordinate ADP.

This sequence belongs to the FGGY kinase family.

It carries out the reaction glycerol + ATP = sn-glycerol 3-phosphate + ADP + H(+). It functions in the pathway polyol metabolism; glycerol degradation via glycerol kinase pathway; sn-glycerol 3-phosphate from glycerol: step 1/1. With respect to regulation, inhibited by fructose 1,6-bisphosphate (FBP). Its function is as follows. Key enzyme in the regulation of glycerol uptake and metabolism. Catalyzes the phosphorylation of glycerol to yield sn-glycerol 3-phosphate. This chain is Glycerol kinase 1, found in Pseudomonas aeruginosa (strain ATCC 15692 / DSM 22644 / CIP 104116 / JCM 14847 / LMG 12228 / 1C / PRS 101 / PAO1).